Consider the following 167-residue polypeptide: 2-C-methyl-D-erythritol 2,4-cyclodiphosphate synthase (167 aa).

Residues D8 and H10 each contribute to the a divalent metal cation site. 4-CDP-2-C-methyl-D-erythritol 2-phosphate-binding positions include D8–H10 and H34–S35. Residue H42 participates in a divalent metal cation binding. 4-CDP-2-C-methyl-D-erythritol 2-phosphate contacts are provided by residues D56–G58 and R142.

This sequence belongs to the IspF family. Homotrimer. A divalent metal cation serves as cofactor.

It carries out the reaction 4-CDP-2-C-methyl-D-erythritol 2-phosphate = 2-C-methyl-D-erythritol 2,4-cyclic diphosphate + CMP. It participates in isoprenoid biosynthesis; isopentenyl diphosphate biosynthesis via DXP pathway; isopentenyl diphosphate from 1-deoxy-D-xylulose 5-phosphate: step 4/6. In terms of biological role, involved in the biosynthesis of isopentenyl diphosphate (IPP) and dimethylallyl diphosphate (DMAPP), two major building blocks of isoprenoid compounds. Catalyzes the conversion of 4-diphosphocytidyl-2-C-methyl-D-erythritol 2-phosphate (CDP-ME2P) to 2-C-methyl-D-erythritol 2,4-cyclodiphosphate (ME-CPP) with a corresponding release of cytidine 5-monophosphate (CMP). This chain is 2-C-methyl-D-erythritol 2,4-cyclodiphosphate synthase, found in Buchnera aphidicola subsp. Schizaphis graminum (strain Sg).